A 178-amino-acid polypeptide reads, in one-letter code: Large ribosomal subunit protein uL6 (178 aa).

It belongs to the universal ribosomal protein uL6 family. As to quaternary structure, part of the 50S ribosomal subunit.

Its function is as follows. This protein binds to the 23S rRNA, and is important in its secondary structure. It is located near the subunit interface in the base of the L7/L12 stalk, and near the tRNA binding site of the peptidyltransferase center. The sequence is that of Large ribosomal subunit protein uL6 from Shouchella clausii (strain KSM-K16) (Alkalihalobacillus clausii).